A 312-amino-acid polypeptide reads, in one-letter code: DNA-directed RNA polymerase subunit alpha (312 aa).

The tract at residues Met1–Thr226 is alpha N-terminal domain (alpha-NTD). The segment at Ser242 to Lys312 is alpha C-terminal domain (alpha-CTD).

It belongs to the RNA polymerase alpha chain family. As to quaternary structure, homodimer. The RNAP catalytic core consists of 2 alpha, 1 beta, 1 beta' and 1 omega subunit. When a sigma factor is associated with the core the holoenzyme is formed, which can initiate transcription.

It catalyses the reaction RNA(n) + a ribonucleoside 5'-triphosphate = RNA(n+1) + diphosphate. Functionally, DNA-dependent RNA polymerase catalyzes the transcription of DNA into RNA using the four ribonucleoside triphosphates as substrates. This Streptococcus suis (strain 98HAH33) protein is DNA-directed RNA polymerase subunit alpha.